The sequence spans 297 residues: MTDYRAGFVSFVGRPNVGKSTLTNALVGEKIAITSSKPQTTRRAIRGIMHRREGQLILVDTPGVHRPRTLLGERLNTLVESTLGDVDVIGFCVPADERIGPGDRFINERLDDYPRAKKVAIVTKIDSARKTQVAEQLLAVSALREWEAIVPVSAVNSIQLDTLTTELMRLLPVSPGPLYPDESVTDEGVEDRIAEYIREAVLDGVEDELPHSLAVTIDDLVERDDKDLLEIYANLFVERDSQKAIVIGKGGSRIREVGATAREPIEALLGRHVFLSIRVKVAKDWQRDPKQLGRLGF.

The Era-type G domain maps to 5 to 173; sequence RAGFVSFVGR…TTELMRLLPV (169 aa). A G1 region spans residues 13–20; it reads GRPNVGKS. 13-20 provides a ligand contact to GTP; sequence GRPNVGKS. The segment at 39–43 is G2; the sequence is QTTRR. Positions 60–63 are G3; sequence DTPG. GTP is bound by residues 60 to 64 and 123 to 126; these read DTPGV and TKID. The G4 stretch occupies residues 123–126; that stretch reads TKID. The tract at residues 152 to 154 is G5; the sequence is VSA. The KH type-2 domain maps to 205–283; the sequence is VEDELPHSLA…FLSIRVKVAK (79 aa).

Belongs to the TRAFAC class TrmE-Era-EngA-EngB-Septin-like GTPase superfamily. Era GTPase family. As to quaternary structure, monomer.

The protein localises to the cytoplasm. It localises to the cell membrane. Its function is as follows. An essential GTPase that binds both GDP and GTP, with rapid nucleotide exchange. Plays a role in 16S rRNA processing and 30S ribosomal subunit biogenesis and possibly also in cell cycle regulation and energy metabolism. The sequence is that of GTPase Era from Leifsonia xyli subsp. xyli (strain CTCB07).